Reading from the N-terminus, the 238-residue chain is Flagellar L-ring protein (238 aa).

A signal peptide spans 1–17; it reads MKRRLLAAGCAMLLLSG. Cysteine 18 carries the N-palmitoyl cysteine lipid modification. Residue cysteine 18 is the site of S-diacylglycerol cysteine attachment. The interval 22 to 50 is disordered; that stretch reads RQQPSPVPPVTQPQAYAEPEDTAANPGSL.

It belongs to the FlgH family. As to quaternary structure, the basal body constitutes a major portion of the flagellar organelle and consists of four rings (L,P,S, and M) mounted on a central rod.

Its subcellular location is the cell outer membrane. The protein resides in the bacterial flagellum basal body. Functionally, assembles around the rod to form the L-ring and probably protects the motor/basal body from shearing forces during rotation. This is Flagellar L-ring protein from Nitratidesulfovibrio vulgaris (strain DSM 19637 / Miyazaki F) (Desulfovibrio vulgaris).